The following is a 267-amino-acid chain: Small ribosomal subunit protein uS3 (267 aa).

Residues isoleucine 43 to lysine 111 enclose the KH type-2 domain. The disordered stretch occupies residues phenylalanine 216 to glutamate 267. Over residues glutamine 228–glutamine 240 the composition is skewed to basic residues. Residues arginine 241 to glutamate 267 are compositionally biased toward low complexity.

The protein belongs to the universal ribosomal protein uS3 family. As to quaternary structure, part of the 30S ribosomal subunit. Forms a tight complex with proteins S10 and S14.

Its function is as follows. Binds the lower part of the 30S subunit head. Binds mRNA in the 70S ribosome, positioning it for translation. This chain is Small ribosomal subunit protein uS3, found in Bifidobacterium adolescentis (strain ATCC 15703 / DSM 20083 / NCTC 11814 / E194a).